A 326-amino-acid polypeptide reads, in one-letter code: AA10 family lytic polysaccharide monooxygenase C (326 aa).

Positions 1–32 (MVFSNSNASVSLFRLVALVATLSHLVFTFVDA) are cleaved as a signal peptide. Residues His-33 and His-118 each coordinate Cu(2+). Residues 33–200 (HGYVTFPASR…ANAFYQCLDL (168 aa)) enclose the Chitin-binding type-4 domain. The cysteines at positions 81 and 197 are disulfide-linked. Residues Asn-206, Asn-215, Asn-266, and Asn-303 are each glycosylated (N-linked (GlcNAc...) asparagine). The tract at residues 206-326 (NSSSSSSSSN…KSQMRRDRQG (121 aa)) is disordered. The span at 207 to 281 (SSSSSSSSNS…NNGGSSGSTT (75 aa)) shows a compositional bias: low complexity.

Belongs to the polysaccharide monooxygenase AA10 family. The cofactor is Cu(2+).

It is found in the secreted. In terms of biological role, lytic polysaccharide monooxygenase (LPMO) that oxidatively cleaves alpha- and beta-chitin with C1 regioselectivity. Catalysis by LPMOs requires the reduction of the active-site copper from Cu(II) to Cu(I) by a reducing agent and H(2)O(2) or O(2) as a cosubstrate. Exhibits enzymatic activity on U.maydis fungal cell wall chitin and Boosts chitin hydrolysis by chitinase GH18A. This is AA10 family lytic polysaccharide monooxygenase C from Mycosarcoma maydis (Corn smut fungus).